The sequence spans 422 residues: Serine--tRNA ligase (422 aa).

230-232 (TAE) is a binding site for L-serine. 261–263 (RAE) is an ATP binding site. Residue Glu-284 participates in L-serine binding. 348–351 (EISS) contacts ATP. L-serine is bound at residue Ser-383.

It belongs to the class-II aminoacyl-tRNA synthetase family. Type-1 seryl-tRNA synthetase subfamily. Homodimer. The tRNA molecule binds across the dimer.

It is found in the cytoplasm. It catalyses the reaction tRNA(Ser) + L-serine + ATP = L-seryl-tRNA(Ser) + AMP + diphosphate + H(+). The catalysed reaction is tRNA(Sec) + L-serine + ATP = L-seryl-tRNA(Sec) + AMP + diphosphate + H(+). It functions in the pathway aminoacyl-tRNA biosynthesis; selenocysteinyl-tRNA(Sec) biosynthesis; L-seryl-tRNA(Sec) from L-serine and tRNA(Sec): step 1/1. Its function is as follows. Catalyzes the attachment of serine to tRNA(Ser). Is also able to aminoacylate tRNA(Sec) with serine, to form the misacylated tRNA L-seryl-tRNA(Sec), which will be further converted into selenocysteinyl-tRNA(Sec). This is Serine--tRNA ligase from Pelotomaculum thermopropionicum (strain DSM 13744 / JCM 10971 / SI).